The primary structure comprises 410 residues: DNA replication and repair protein RecF (410 aa).

An ATP-binding site is contributed by 30 to 37; sequence GPNGHGKT.

Belongs to the RecF family.

The protein localises to the cytoplasm. Its function is as follows. The RecF protein is involved in DNA metabolism; it is required for DNA replication and normal SOS inducibility. RecF binds preferentially to single-stranded, linear DNA. It also seems to bind ATP. The chain is DNA replication and repair protein RecF from Rhodococcus jostii (strain RHA1).